The following is a 605-amino-acid chain: Terpenoid synthase 18 (605 aa).

Mg(2+) contacts are provided by Asp356, Asp360, Asn500, Thr504, and Glu508. The short motif at 356–360 (DDTYD) is the DDXXD motif element.

The protein belongs to the terpene synthase family. Tpsa subfamily. It depends on Mg(2+) as a cofactor. Requires Mn(2+) as cofactor. As to expression, predominantly expressed in flowers and siliques but also in roots and leaves.

The protein resides in the cytoplasm. The protein operates within secondary metabolite biosynthesis; terpenoid biosynthesis. The chain is Terpenoid synthase 18 (TPS18) from Arabidopsis thaliana (Mouse-ear cress).